The primary structure comprises 159 residues: U-actitoxin-Avd13a/b (159 aa).

An N-terminal signal peptide occupies residues 1-18 (MKSIFLVFFAVCLVKAEA). A propeptide spanning residues 19-26 (GKGRKREP) is cleaved from the precursor. 2 disulfides stabilise this stretch: Cys33–Cys45 and Cys36–Cys52. Positions 59-60 (EP) are excised as a propeptide. Cystine bridges form between Cys67-Cys79 and Cys70-Cys86. A propeptide spanning residues 93-94 (EP) is cleaved from the precursor. Disulfide bonds link Cys101-Cys113 and Cys104-Cys120. Positions 127-128 (EP) are excised as a propeptide. 2 disulfides stabilise this stretch: Cys135–Cys147 and Cys138–Cys154.

This sequence belongs to the sea anemone BBH family.

It is found in the secreted. The protein localises to the nematocyst. Inhibits ion channels. This Anemonia viridis (Snakelocks anemone) protein is U-actitoxin-Avd13a/b.